A 129-amino-acid chain; its full sequence is Small ribosomal subunit protein uS9 (129 aa).

The tract at residues 107–129 is disordered; it reads SRTVERKKYGRRKARRSPQFSKR. Basic residues predominate over residues 114-129; it reads KYGRRKARRSPQFSKR.

Belongs to the universal ribosomal protein uS9 family.

In Campylobacter jejuni subsp. jejuni serotype O:23/36 (strain 81-176), this protein is Small ribosomal subunit protein uS9.